Reading from the N-terminus, the 472-residue chain is Siroheme synthase (472 aa).

The precorrin-2 dehydrogenase /sirohydrochlorin ferrochelatase stretch occupies residues 1–203 (MNYLPIFIDI…GKIQEAKADL (203 aa)). NAD(+) contacts are provided by residues 22–23 (DI) and 43–44 (KS). At S128 the chain carries Phosphoserine. The tract at residues 216-472 (GEVYLVGGGP…SSKKSYLFGG (257 aa)) is uroporphyrinogen-III C-methyltransferase. P225 serves as a coordination point for S-adenosyl-L-methionine. Catalysis depends on D248, which acts as the Proton acceptor. Residue K270 is the Proton donor of the active site. S-adenosyl-L-methionine contacts are provided by residues 301–303 (GGD), I306, 331–332 (TA), M383, and G412.

The protein in the N-terminal section; belongs to the precorrin-2 dehydrogenase / sirohydrochlorin ferrochelatase family. It in the C-terminal section; belongs to the precorrin methyltransferase family.

It carries out the reaction uroporphyrinogen III + 2 S-adenosyl-L-methionine = precorrin-2 + 2 S-adenosyl-L-homocysteine + H(+). The enzyme catalyses precorrin-2 + NAD(+) = sirohydrochlorin + NADH + 2 H(+). It catalyses the reaction siroheme + 2 H(+) = sirohydrochlorin + Fe(2+). The protein operates within cofactor biosynthesis; adenosylcobalamin biosynthesis; precorrin-2 from uroporphyrinogen III: step 1/1. It participates in cofactor biosynthesis; adenosylcobalamin biosynthesis; sirohydrochlorin from precorrin-2: step 1/1. Its pathway is porphyrin-containing compound metabolism; siroheme biosynthesis; precorrin-2 from uroporphyrinogen III: step 1/1. It functions in the pathway porphyrin-containing compound metabolism; siroheme biosynthesis; siroheme from sirohydrochlorin: step 1/1. The protein operates within porphyrin-containing compound metabolism; siroheme biosynthesis; sirohydrochlorin from precorrin-2: step 1/1. Functionally, multifunctional enzyme that catalyzes the SAM-dependent methylations of uroporphyrinogen III at position C-2 and C-7 to form precorrin-2 via precorrin-1. Then it catalyzes the NAD-dependent ring dehydrogenation of precorrin-2 to yield sirohydrochlorin. Finally, it catalyzes the ferrochelation of sirohydrochlorin to yield siroheme. The polypeptide is Siroheme synthase (Ruthia magnifica subsp. Calyptogena magnifica).